The primary structure comprises 360 residues: DNA replication and repair protein RecF (360 aa).

30–37 is a binding site for ATP; it reads GQNGSGKT.

The protein belongs to the RecF family.

It localises to the cytoplasm. The RecF protein is involved in DNA metabolism; it is required for DNA replication and normal SOS inducibility. RecF binds preferentially to single-stranded, linear DNA. It also seems to bind ATP. This Shewanella baltica (strain OS185) protein is DNA replication and repair protein RecF.